Here is a 408-residue protein sequence, read N- to C-terminus: LIN1-like protein (408 aa).

Residues 1–161 (MKRTLRNPGN…SVPSSPKRMS (161 aa)) form a disordered region. Residues 41–52 (YYESESEEDEDQ) are compositionally biased toward acidic residues. Composition is skewed to basic and acidic residues over residues 53–62 (ILNKEKKEGQ), 73–109 (DEKR…KEVL), and 119–129 (NGKYSKLRYED). The GYF domain maps to 344-402 (SSQYNFKWEFDDKTYGPYTASQIQAWSNEGYFTDAKHAAFIQLANMDEWMYPNNICFCD).

The protein belongs to the LIN1 family.

This is LIN1-like protein from Schizosaccharomyces pombe (strain 972 / ATCC 24843) (Fission yeast).